We begin with the raw amino-acid sequence, 218 residues long: MHHSFFYDSNTEKISLIAQAAYYDRTLTTPIEIYCNVNLFTFFDSIKHIGLGYNTPTGRDILFDVRFLGNNYYQDPETAPSYPPEFIQMQQEYPTLSNWNAVKTIQLVSNLLPINKESIPSFRNSNVGIINAQGILADFVPLVTNGPEARISIDFVATGPWRLIDMFGSVPIYMVDLYVYWTDQTGGQYLINIPPGRILTCKLVFIKKSLSKYLVSEK.

It localises to the virion. This Sputnik virophage protein is Structural protein V19.